A 317-amino-acid chain; its full sequence is Aspartate carbamoyltransferase catalytic subunit (317 aa).

The carbamoyl phosphate site is built by Arg66 and Thr67. Lys94 provides a ligand contact to L-aspartate. The carbamoyl phosphate site is built by Arg116, His144, and Gln147. Positions 177 and 231 each coordinate L-aspartate. Carbamoyl phosphate is bound by residues Gly272 and Pro273.

This sequence belongs to the aspartate/ornithine carbamoyltransferase superfamily. ATCase family. Heterododecamer (2C3:3R2) of six catalytic PyrB chains organized as two trimers (C3), and six regulatory PyrI chains organized as three dimers (R2).

It carries out the reaction carbamoyl phosphate + L-aspartate = N-carbamoyl-L-aspartate + phosphate + H(+). Its pathway is pyrimidine metabolism; UMP biosynthesis via de novo pathway; (S)-dihydroorotate from bicarbonate: step 2/3. Functionally, catalyzes the condensation of carbamoyl phosphate and aspartate to form carbamoyl aspartate and inorganic phosphate, the committed step in the de novo pyrimidine nucleotide biosynthesis pathway. The protein is Aspartate carbamoyltransferase catalytic subunit of Rhodopseudomonas palustris (strain HaA2).